A 193-amino-acid polypeptide reads, in one-letter code: Acyl carrier protein phosphodiesterase (193 aa).

This sequence belongs to the AcpH family.

It catalyses the reaction holo-[ACP] + H2O = apo-[ACP] + (R)-4'-phosphopantetheine + H(+). In terms of biological role, converts holo-ACP to apo-ACP by hydrolytic cleavage of the phosphopantetheine prosthetic group from ACP. The protein is Acyl carrier protein phosphodiesterase of Shigella boydii serotype 18 (strain CDC 3083-94 / BS512).